Here is a 301-residue protein sequence, read N- to C-terminus: MPIIIDKDLPARKVLQKENIFVMTKERAETQDIRALKIAILNLMPTKQDTEAQLLRLIGNTPLQLDVHLLHMESHLSRNVTQEHLTSFYKTFRDIENEKFDGLIITGAPVETLAFEEVDYWEELKHIMEYSKTNVTSTLHICWGAQAGLYYHYGVPKYPLKEKMFGVFEHEVCEQHVKLLQGFDELFFAPHSRHTEVRENDIREVKELTLLANSEEAGVHLVIGPEGRQVFALGHSEYSCETLKQEYERDRDKGLNIDVPKNYFKHNNPDEKPLVRWRSHGNLLFSNWLNYYVYQETPYIL.

Cys-142 acts as the Acyl-thioester intermediate in catalysis. 2 residues coordinate substrate: Lys-163 and Ser-192. His-235 serves as the catalytic Proton acceptor. Residue Glu-237 is part of the active site. Substrate is bound at residue Arg-249.

The protein belongs to the MetA family.

The protein resides in the cytoplasm. The catalysed reaction is L-homoserine + acetyl-CoA = O-acetyl-L-homoserine + CoA. It functions in the pathway amino-acid biosynthesis; L-methionine biosynthesis via de novo pathway; O-acetyl-L-homoserine from L-homoserine: step 1/1. Functionally, transfers an acetyl group from acetyl-CoA to L-homoserine, forming acetyl-L-homoserine. The polypeptide is Homoserine O-acetyltransferase (Bacillus cereus (strain ATCC 14579 / DSM 31 / CCUG 7414 / JCM 2152 / NBRC 15305 / NCIMB 9373 / NCTC 2599 / NRRL B-3711)).